A 945-amino-acid chain; its full sequence is Leucine--tRNA ligase (945 aa).

A 'HIGH' region motif is present at residues 43–53 (PYPNGAVHIGH). A 'KMSKS' region motif is present at residues 638-642 (KMSKS). Lysine 641 is a binding site for ATP.

Belongs to the class-I aminoacyl-tRNA synthetase family.

It localises to the cytoplasm. The enzyme catalyses tRNA(Leu) + L-leucine + ATP = L-leucyl-tRNA(Leu) + AMP + diphosphate. The protein is Leucine--tRNA ligase of Pyrobaculum islandicum (strain DSM 4184 / JCM 9189 / GEO3).